Consider the following 251-residue polypeptide: Small ribosomal subunit protein uS4c (251 aa).

S4 RNA-binding domains lie at 110 to 170 (MRLD…KLVN) and 189 to 251 (RTLA…QFSE).

This sequence belongs to the universal ribosomal protein uS4 family. As to quaternary structure, part of the 30S ribosomal subunit. Contacts protein S5. The interaction surface between S4 and S5 is involved in control of translational fidelity.

It is found in the plastid. The protein localises to the chloroplast. In terms of biological role, one of the primary rRNA binding proteins, it binds directly to 16S rRNA where it nucleates assembly of the body of the 30S subunit. Functionally, with S5 and S12 plays an important role in translational accuracy. This Tetradesmus obliquus (Green alga) protein is Small ribosomal subunit protein uS4c (rps4).